A 447-amino-acid chain; its full sequence is GTPase Der (447 aa).

EngA-type G domains are found at residues 3-167 (PVVA…NLPD) and 181-354 (IKLA…KSAT). GTP contacts are provided by residues 9–16 (GRPNVGKS), 56–60 (DTGGF), 119–122 (NKAE), 187–194 (GRPNVGKS), 234–238 (DTAGL), and 299–302 (NKWD). Residues 355 to 439 (RKMSTPVLTR…PLRIQFKSSQ (85 aa)) enclose the KH-like domain.

It belongs to the TRAFAC class TrmE-Era-EngA-EngB-Septin-like GTPase superfamily. EngA (Der) GTPase family. Associates with the 50S ribosomal subunit.

Its function is as follows. GTPase that plays an essential role in the late steps of ribosome biogenesis. This chain is GTPase Der, found in Variovorax paradoxus (strain S110).